We begin with the raw amino-acid sequence, 243 residues long: MTEIKFHRVLLKLSGEALAGPGGSGIDLTTVKRVANELAEIKRAYPQVQIAIVNGGGNLWRGEPAAKAGMDRARADYIGMLGTVMNALSLADALEQAGVVTRVLTAIEMRQIAEPYIRGRAIRHLEKGRIVIFGAGTGSPYFSTDTTAALRAAEINADAILMGKNGVDGVYDSDPRKNNEAIKFAELTYDEVLRKDLKVMDSTAGAMAKDTDMPLVVFNLNEAGNIQKAIEGQDIGTVIKGSK.

Residue K12–G15 participates in ATP binding. An involved in allosteric activation by GTP region spans residues G20–G25. G56 is a binding site for UMP. G57 and R61 together coordinate ATP. UMP is bound by residues D76 and T137–T144. ATP contacts are provided by N165, Y171, and D174.

Belongs to the UMP kinase family. In terms of assembly, homohexamer.

The protein resides in the cytoplasm. The catalysed reaction is UMP + ATP = UDP + ADP. It functions in the pathway pyrimidine metabolism; CTP biosynthesis via de novo pathway; UDP from UMP (UMPK route): step 1/1. With respect to regulation, allosterically activated by GTP. Inhibited by UTP. Its function is as follows. Catalyzes the reversible phosphorylation of UMP to UDP. The sequence is that of Uridylate kinase from Oenococcus oeni (strain ATCC BAA-331 / PSU-1).